The primary structure comprises 929 residues: Lon protease homolog 2, peroxisomal (929 aa).

The region spanning 11-257 (LPLVPLPKGS…RVVEILTRQL (247 aa)) is the Lon N-terminal domain. Positions 302 to 325 (GLTPPGLSAGRNNDNDDKESNEVD) are disordered. 484–491 (GPPGVGKT) serves as a coordination point for ATP. Residues 727–914 (HGRPGVVTGL…WEAIRQVWPD (188 aa)) enclose the Lon proteolytic domain. Catalysis depends on residues serine 820 and lysine 863. Positions 927–929 (SRL) match the Microbody targeting signal motif.

This sequence belongs to the peptidase S16 family.

Its subcellular location is the peroxisome matrix. The catalysed reaction is Hydrolysis of proteins in presence of ATP.. ATP-dependent serine protease that mediates the selective degradation of misfolded and unassembled polypeptides in the peroxisomal matrix. Necessary for type 2 peroxisome targeting signal (PTS2)-containing protein processing and facilitates peroxisome matrix protein import. This chain is Lon protease homolog 2, peroxisomal, found in Aspergillus niger (strain ATCC MYA-4892 / CBS 513.88 / FGSC A1513).